We begin with the raw amino-acid sequence, 115 residues long: Large ribosomal subunit protein bL20 (115 aa).

The protein belongs to the bacterial ribosomal protein bL20 family.

Functionally, binds directly to 23S ribosomal RNA and is necessary for the in vitro assembly process of the 50S ribosomal subunit. It is not involved in the protein synthesizing functions of that subunit. This Chlorobium phaeobacteroides (strain BS1) protein is Large ribosomal subunit protein bL20.